Here is a 417-residue protein sequence, read N- to C-terminus: Inactive GDSL esterase/lipase-like protein 25 (417 aa).

An N-terminal signal peptide occupies residues 1–50 (MLLIPSFTANSNEPPPSKLSLSDLSMAILKSHFFLLFPLLLLHFHTVSFA). N-linked (GlcNAc...) asparagine glycosylation is found at Asn-160, Asn-308, and Asn-311. His-331 is a catalytic residue.

This sequence belongs to the 'GDSL' lipolytic enzyme family. In terms of assembly, interacts with the PYK10 complex and TGG2, but not with TGG1 or PEN2. As to expression, expressed throughout the seedling, rosette leaves, roots, inflorescence and imbibed seed, but not in pollen.

The protein resides in the vacuole. It is found in the endoplasmic reticulum. In terms of biological role, involved in organization of the endomembrane system and is required for endoplasmic reticulum morphology and organelle distribution. May act by inhibiting the formation of PYK10 complex by binding to GLL23 and exporting it from the ER. Required for proper subcellular localization of myrosinase TGG2. Has no lipase or esterase activity. This is Inactive GDSL esterase/lipase-like protein 25 (MVP1) from Arabidopsis thaliana (Mouse-ear cress).